A 1387-amino-acid chain; its full sequence is Dicer-like protein 2-1 (1387 aa).

Residues M26–A205 form the Helicase ATP-binding domain. M39–T46 serves as a coordination point for ATP. The short motif at D146 to H149 is the DEAH box element. In terms of domain architecture, Helicase C-terminal spans K370–R535. One can recognise a Dicer dsRNA-binding fold domain in the interval A565–K659. RNase III domains follow at residues A915 to G1055 and D1094 to H1277. E1133, D1263, and E1266 together coordinate Mg(2+).

This sequence belongs to the helicase family. Dicer subfamily. The cofactor is Mg(2+). Mn(2+) is required as a cofactor.

In terms of biological role, dicer-like endonuclease involved in cleaving double-stranded RNA in the RNA interference (RNAi) pathway. Produces 21 to 25 bp dsRNAs (siRNAs) which target the selective destruction of homologous RNAs leading to sequence-specific suppression of gene expression, called post-transcriptional gene silencing (PTGS). Part of a broad host defense response against viral infection and transposons. The polypeptide is Dicer-like protein 2-1 (dcl2-1) (Aspergillus niger (strain ATCC MYA-4892 / CBS 513.88 / FGSC A1513)).